Consider the following 422-residue polypeptide: 2,3-bisphosphoglycerate-independent phosphoglycerate mutase (422 aa).

Residues 173–194 are disordered; that stretch reads DADPKRVGKPVKDVKPTSDDPA. The segment covering 174–190 has biased composition (basic and acidic residues); that stretch reads ADPKRVGKPVKDVKPTS.

This sequence belongs to the BPG-independent phosphoglycerate mutase family. A-PGAM subfamily.

The catalysed reaction is (2R)-2-phosphoglycerate = (2R)-3-phosphoglycerate. Its pathway is carbohydrate degradation; glycolysis; pyruvate from D-glyceraldehyde 3-phosphate: step 3/5. In terms of biological role, catalyzes the interconversion of 2-phosphoglycerate and 3-phosphoglycerate. This chain is 2,3-bisphosphoglycerate-independent phosphoglycerate mutase, found in Methanopyrus kandleri (strain AV19 / DSM 6324 / JCM 9639 / NBRC 100938).